The primary structure comprises 211 residues: Ceramide-1-phosphate transfer protein (211 aa).

The an N-acylsphingoid base 1-phosphate site is built by D53, K57, R103, R107, and H147.

This sequence belongs to the GLTP family.

The protein localises to the cytoplasm. It localises to the cytosol. It is found in the golgi apparatus. The protein resides in the trans-Golgi network membrane. Its subcellular location is the cell membrane. The protein localises to the endosome membrane. It localises to the nucleus outer membrane. It catalyses the reaction N-(hexadecanoyl)-sphing-4-enine-1-phosphate(in) = N-(hexadecanoyl)-sphing-4-enine-1-phosphate(out). The enzyme catalyses N-(9Z-octadecenoyl)-sphing-4-enine-1-phosphate(in) = N-(9Z-octadecenoyl)-sphing-4-enine-1-phosphate(out). Its function is as follows. Mediates the intracellular transfer of ceramide-1-phosphate (C1P) between organelle membranes and the cell membrane. Required for normal structure of the Golgi stacks. Can bind phosphoceramides with a variety of aliphatic chains, but has a preference for lipids with saturated C16:0 or monounsaturated C18:1 aliphatic chains, and is inefficient with phosphoceramides containing lignoceryl (C24:0). Plays a role in the regulation of the cellular levels of ceramide-1-phosphate, and thereby contributes to the regulation of phospholipase PLA2G4A activity and the release of arachidonic acid. Has no activity with galactosylceramide, lactosylceramide, sphingomyelin, phosphatidylcholine, phosphatidic acid and ceramide. C1P transfer is stimulated by phosphatidylserine in C1P source vesicles. Regulates autophagy and pyroptosis, but not apoptosis. The chain is Ceramide-1-phosphate transfer protein (cptp) from Danio rerio (Zebrafish).